A 927-amino-acid polypeptide reads, in one-letter code: DNA polymerase alpha-binding protein (927 aa).

WD repeat units lie at residues 10-49 (FDFG…EEPE), 134-173 (KIDE…PNKV), 227-266 (AANR…LQKT), and 273-313 (STKA…IHYT). Phosphoserine occurs at positions 377, 379, and 398. Thr401 and Thr411 each carry phosphothreonine. A Phosphoserine modification is found at Ser463. Residues 699–739 (GSDNTLLLLSKWRSPEESKWLPILDSNMEIWKMSGGKETTD) form a WD 5 repeat.

It is found in the nucleus. In terms of biological role, accessory factor for DNA replication. It plays a role in accurately duplicating the genome in vivo. The protein is DNA polymerase alpha-binding protein (CTF4) of Saccharomyces cerevisiae (strain ATCC 204508 / S288c) (Baker's yeast).